A 102-amino-acid polypeptide reads, in one-letter code: Small ribosomal subunit protein uS10 (102 aa).

The protein belongs to the universal ribosomal protein uS10 family. Part of the 30S ribosomal subunit.

Functionally, involved in the binding of tRNA to the ribosomes. In Roseiflexus castenholzii (strain DSM 13941 / HLO8), this protein is Small ribosomal subunit protein uS10.